The following is a 247-amino-acid chain: 3-deoxy-manno-octulosonate cytidylyltransferase (247 aa).

Belongs to the KdsB family.

Its subcellular location is the cytoplasm. The catalysed reaction is 3-deoxy-alpha-D-manno-oct-2-ulosonate + CTP = CMP-3-deoxy-beta-D-manno-octulosonate + diphosphate. Its pathway is nucleotide-sugar biosynthesis; CMP-3-deoxy-D-manno-octulosonate biosynthesis; CMP-3-deoxy-D-manno-octulosonate from 3-deoxy-D-manno-octulosonate and CTP: step 1/1. The protein operates within bacterial outer membrane biogenesis; lipopolysaccharide biosynthesis. In terms of biological role, activates KDO (a required 8-carbon sugar) for incorporation into bacterial lipopolysaccharide in Gram-negative bacteria. The sequence is that of 3-deoxy-manno-octulosonate cytidylyltransferase from Methylobacterium sp. (strain 4-46).